Reading from the N-terminus, the 80-residue chain is Exodeoxyribonuclease 7 small subunit (80 aa).

The protein belongs to the XseB family. Heterooligomer composed of large and small subunits.

Its subcellular location is the cytoplasm. It carries out the reaction Exonucleolytic cleavage in either 5'- to 3'- or 3'- to 5'-direction to yield nucleoside 5'-phosphates.. Its function is as follows. Bidirectionally degrades single-stranded DNA into large acid-insoluble oligonucleotides, which are then degraded further into small acid-soluble oligonucleotides. The sequence is that of Exodeoxyribonuclease 7 small subunit from Pseudomonas paraeruginosa (strain DSM 24068 / PA7) (Pseudomonas aeruginosa (strain PA7)).